The primary structure comprises 353 residues: Quinolinate synthase (353 aa).

His-47 and Ser-68 together coordinate iminosuccinate. Residue Cys-113 coordinates [4Fe-4S] cluster. Residues 139 to 141 (YAN) and Ser-156 each bind iminosuccinate. Residue Cys-200 participates in [4Fe-4S] cluster binding. Iminosuccinate contacts are provided by residues 226–228 (HPE) and Thr-243. Residue Cys-297 participates in [4Fe-4S] cluster binding.

This sequence belongs to the quinolinate synthase family. Type 1 subfamily. [4Fe-4S] cluster serves as cofactor.

Its subcellular location is the cytoplasm. The catalysed reaction is iminosuccinate + dihydroxyacetone phosphate = quinolinate + phosphate + 2 H2O + H(+). It participates in cofactor biosynthesis; NAD(+) biosynthesis; quinolinate from iminoaspartate: step 1/1. Functionally, catalyzes the condensation of iminoaspartate with dihydroxyacetone phosphate to form quinolinate. In Yersinia pestis bv. Antiqua (strain Antiqua), this protein is Quinolinate synthase.